Consider the following 174-residue polypeptide: Large ribosomal subunit protein bL17 (174 aa).

This sequence belongs to the bacterial ribosomal protein bL17 family. Part of the 50S ribosomal subunit. Contacts protein L32.

The polypeptide is Large ribosomal subunit protein bL17 (Acetivibrio thermocellus (strain ATCC 27405 / DSM 1237 / JCM 9322 / NBRC 103400 / NCIMB 10682 / NRRL B-4536 / VPI 7372) (Clostridium thermocellum)).